A 24-amino-acid polypeptide reads, in one-letter code: Conotoxin PIVE (24 aa).

Cystine bridges form between Cys2–Cys10, Cys3–Cys15, and Cys13–Cys19. Lys24 carries the lysine amide modification.

Belongs to the conotoxin A superfamily. In terms of tissue distribution, expressed by the venom duct.

It is found in the secreted. Functionally, probable neurotoxin with ion channel inhibitor activity. In vivo, elicits dose-dependently excitatory activity upon injection into fish. Its action is slowly reversible. The protein is Conotoxin PIVE of Conus purpurascens (Purple cone).